Here is a 528-residue protein sequence, read N- to C-terminus: Phosphoenolpyruvate carboxykinase (ATP) (528 aa).

Residues Arg-56, Tyr-192, and Lys-198 each coordinate substrate. ATP is bound by residues Lys-198, His-217, and 233-241 (GLSGTGKTT). Mn(2+) is bound by residues Lys-198 and His-217. Mn(2+) is bound at residue Asp-254. 3 residues coordinate ATP: Glu-282, Arg-319, and Thr-444. Substrate is bound at residue Arg-319.

Belongs to the phosphoenolpyruvate carboxykinase (ATP) family. Mn(2+) serves as cofactor.

Its subcellular location is the cytoplasm. The catalysed reaction is oxaloacetate + ATP = phosphoenolpyruvate + ADP + CO2. Its pathway is carbohydrate biosynthesis; gluconeogenesis. Functionally, involved in the gluconeogenesis. Catalyzes the conversion of oxaloacetate (OAA) to phosphoenolpyruvate (PEP) through direct phosphoryl transfer between the nucleoside triphosphate and OAA. This is Phosphoenolpyruvate carboxykinase (ATP) from Bacillus mycoides (strain KBAB4) (Bacillus weihenstephanensis).